Reading from the N-terminus, the 101-residue chain is Urease subunit beta (101 aa).

The protein belongs to the urease beta subunit family. As to quaternary structure, heterotrimer of UreA (gamma), UreB (beta) and UreC (alpha) subunits. Three heterotrimers associate to form the active enzyme.

The protein localises to the cytoplasm. It catalyses the reaction urea + 2 H2O + H(+) = hydrogencarbonate + 2 NH4(+). It participates in nitrogen metabolism; urea degradation; CO(2) and NH(3) from urea (urease route): step 1/1. In Acaryochloris marina (strain MBIC 11017), this protein is Urease subunit beta.